Reading from the N-terminus, the 870-residue chain is A-kinase anchor protein 2 (870 aa).

Disordered stretches follow at residues 14 to 43 (PGIT…DHHE) and 103 to 165 (IEKA…SSRD). Ser-122 carries the post-translational modification Phosphoserine. A compositionally biased stretch (polar residues) spans 133–151 (GHSTDQPQDMLGNSLQAPA). Position 152 is a phosphoserine (Ser-152). Positions 152 to 161 (SPSSSTSSHC) are enriched in low complexity. Residue Lys-174 forms a Glycyl lysine isopeptide (Lys-Gly) (interchain with G-Cter in SUMO1); alternate linkage. A Glycyl lysine isopeptide (Lys-Gly) (interchain with G-Cter in SUMO2); alternate cross-link involves residue Lys-174. Positions 213–307 (EEMIELEKER…QQQQLSTSQL (95 aa)) form a coiled coil. The segment at 233-324 (KNPGIAAKWW…EHLDSIEHTK (92 aa)) is disordered. Positions 259-274 (LESHRKYKERKEKRAQ) are enriched in basic and acidic residues. A compositionally biased stretch (low complexity) spans 275 to 302 (QEQLQLQQQQQQQLQQLQQLQQQQQQQL). A compositionally biased stretch (basic and acidic residues) spans 313 to 324 (AHEHLDSIEHTK). At Ser-347 the chain carries Phosphoserine. Positions 409 to 436 (ESQSAGAGTGNAATQGKEGPYSEPSKRG) are disordered. Residues 410-424 (SQSAGAGTGNAATQG) show a composition bias toward low complexity. 3 positions are modified to phosphoserine: Ser-472, Ser-476, and Ser-528. Residues 506 to 543 (FSMDNISDSGASNETPNALQENSLADFSLPQTPQTDNP) are compositionally biased toward polar residues. Disordered stretches follow at residues 506–577 (FSMD…DPLE) and 595–688 (QVDK…RPEG). Residue Thr-537 is modified to Phosphothreonine. Positions 576–589 (LEYQAGLLVQNAIQ) are PKA-RII subunit binding domain. Residues 595–608 (QVDKAEVHTSKEGS) are compositionally biased toward basic and acidic residues. Residue Ser-641 is modified to Phosphoserine. A compositionally biased stretch (basic and acidic residues) spans 644 to 665 (QEKRDVLPKILPGEDKTLREKG). The stretch at 720-755 (KLRSRKQRTLSMIEEEIRAAQEREEELKRQRQVRQS) forms a coiled coil. 4 positions are modified to phosphoserine: Ser-730, Ser-758, Ser-789, and Ser-796. The disordered stretch occupies residues 740-814 (QEREEELKRQ…EAAGAQRPKN (75 aa)). A compositionally biased stretch (polar residues) spans 755-774 (STPSPRAQNAPSLPSRTTCY).

The protein localises to the apical cell membrane. Its function is as follows. Binds to regulatory subunit (RII) of protein kinase A. May be involved in establishing polarity in signaling systems or in integrating PKA-RII isoforms with downstream effectors to capture, amplify and focus diffuse, trans-cellular signals carried by cAMP. Binds to and modulates the structure of the actin cytoskeleton. The sequence is that of A-kinase anchor protein 2 from Rattus norvegicus (Rat).